The following is a 214-amino-acid chain: Adenylate kinase (214 aa).

10–15 is an ATP binding site; it reads GAGKGT. An NMP region spans residues 30 to 59; that stretch reads STGDMFRAAIKAGTELGKQAKALMDEGKLV. Residues Thr31, Arg36, 57–59, 85–88, and Gln92 contribute to the AMP site; these read KLV and GFPR. The interval 122–159 is LID; the sequence is GRRVHQASGRSYHIVYNPPKVEGKDDVTGEDLIIRADD. Residues Arg123 and 132–133 contribute to the ATP site; that span reads SY. Arg156 and Arg167 together coordinate AMP. An ATP-binding site is contributed by Gln200.

It belongs to the adenylate kinase family. As to quaternary structure, monomer.

Its subcellular location is the cytoplasm. It carries out the reaction AMP + ATP = 2 ADP. The protein operates within purine metabolism; AMP biosynthesis via salvage pathway; AMP from ADP: step 1/1. In terms of biological role, catalyzes the reversible transfer of the terminal phosphate group between ATP and AMP. Plays an important role in cellular energy homeostasis and in adenine nucleotide metabolism. It may be linked to the biosynthesis of lipopolysaccharide surface molecules, which are important for the pathogenesis of H.influenzae. The chain is Adenylate kinase from Haemophilus influenzae (strain ATCC 51907 / DSM 11121 / KW20 / Rd).